Here is a 221-residue protein sequence, read N- to C-terminus: DNA repair and recombination protein RadB (221 aa).

It belongs to the eukaryotic RecA-like protein family. RadB subfamily.

Its function is as follows. Involved in DNA repair and in homologous recombination. May regulate the cleavage reactions of the branch-structured DNA. Has a very weak ATPase activity that is not stimulated by DNA. Binds DNA but does not promote DNA strands exchange. The polypeptide is DNA repair and recombination protein RadB (Thermococcus gammatolerans (strain DSM 15229 / JCM 11827 / EJ3)).